Reading from the N-terminus, the 162-residue chain is Lymphocyte antigen 86 (162 aa).

The N-terminal stretch at M1–G20 is a signal peptide. Disulfide bonds link C33-C58, C45-C154, and C102-C112. The N-linked (GlcNAc...) asparagine glycan is linked to N96. Residue N156 is glycosylated (N-linked (GlcNAc...) asparagine).

As to quaternary structure, M-shaped tetramer of two CD180-LY86 heterodimers. In terms of tissue distribution, highly expressed in B-cells, monocytes and tonsil.

Its subcellular location is the secreted. It is found in the extracellular space. Functionally, may cooperate with CD180 and TLR4 to mediate the innate immune response to bacterial lipopolysaccharide (LPS) and cytokine production. Important for efficient CD180 cell surface expression. The sequence is that of Lymphocyte antigen 86 (LY86) from Homo sapiens (Human).